Reading from the N-terminus, the 299-residue chain is Acetyl-hydrolase (299 aa).

The short motif at 73–75 is the Involved in the stabilization of the negatively charged intermediate by the formation of the oxyanion hole element; it reads HGG. Catalysis depends on residues Ser-143, Glu-237, and His-267.

This sequence belongs to the 'GDXG' lipolytic enzyme family.

Its pathway is secondary metabolite biosynthesis; bialaphos biosynthesis. In terms of biological role, this protein removes the N-acetyl group from bialaphos as one of the final steps of biosynthesis of phosphinothricin tripeptide (PTT), also known as bialaphos (BA), a natural-product antibiotic and potent herbicide. The protein is Acetyl-hydrolase (bah) of Streptomyces hygroscopicus.